Reading from the N-terminus, the 309-residue chain is Taste receptor type 2 member 31 (309 aa).

Topologically, residues 1-2 are extracellular; the sequence is MI. Residues 3 to 23 traverse the membrane as a helical segment; that stretch reads TFLPTIFSILVVVIFVIGNFG. The Cytoplasmic portion of the chain corresponds to 24-55; it reads NGFIALVNSIEWVKRQKISFADQILTALAVSR. A helical transmembrane segment spans residues 56–76; that stretch reads VGLLWALLLNWYSTVFNPAFY. Residues 77 to 100 lie on the Extracellular side of the membrane; it reads SVGVRTTVYDVWTVTGHFSNWLAT. Residues 101–121 form a helical membrane-spanning segment; the sequence is SLSIFYLLKIANFSNLIFLHL. The Cytoplasmic portion of the chain corresponds to 122–126; that stretch reads KRRVK. Residues 127–147 traverse the membrane as a helical segment; the sequence is SVILVMLLGPLLFLACQLFVI. Residues 148-181 lie on the Extracellular side of the membrane; that stretch reads NMKEILRTKEYEGNMTWKIKLRSAMYLSDATITT. The N-linked (GlcNAc...) asparagine glycan is linked to Asn161. Residues 182–202 form a helical membrane-spanning segment; the sequence is LANLVPFTLTLLSFLLLICSL. At 203 to 229 the chain is on the cytoplasmic side; that stretch reads CKHLNKMQLHGKGSQDPSTKVHIKVLQ. A helical membrane pass occupies residues 230-250; the sequence is TVISFLLLCAIYFLSIMISVW. Residues 251 to 259 lie on the Extracellular side of the membrane; that stretch reads SFGSLENKP. The helical transmembrane segment at 260–280 threads the bilayer; the sequence is VFMFCKAIRFSYPSIHPFILI. At 281-309 the chain is on the cytoplasmic side; the sequence is WGNKKLKQTFLSVLRQVRYWVKGEKPSSP.

It belongs to the G-protein coupled receptor T2R family.

The protein localises to the membrane. Receptor that may play a role in the perception of bitterness and is gustducin-linked. May play a role in sensing the chemical composition of the gastrointestinal content. The activity of this receptor may stimulate alpha gustducin, mediate PLC-beta-2 activation and lead to the gating of TRPM5. The chain is Taste receptor type 2 member 31 (TAS2R31) from Pongo pygmaeus (Bornean orangutan).